The primary structure comprises 356 residues: Septin-12 (356 aa).

The interval 1-23 (MDERRTPSPCSSRPSSPRTPPCE) is disordered. Residues 7 to 16 (PSPCSSRPSS) show a composition bias toward low complexity. Residues 44–315 (TGFEFNIMVV…ENYRVLRLNE (272 aa)) enclose the Septin-type G domain. The segment at 44–317 (TGFEFNIMVV…YRVLRLNESH (274 aa)) is interaction with SEPTIN7. The segment at 54 to 61 (GQSGLGKS) is G1 motif. GTP is bound by residues 54-61 (GQSGLGKS), Thr87, Gly113, 193-201 (RADSLTIEE), Gly249, and Arg264. The tract at residues 110 to 113 (DTPG) is G3 motif. A G4 motif region spans residues 192-195 (ARAD). Positions 256-356 (VNGRCVLGRK…RSKDPRDDEC (101 aa)) are self-association (via N-terminus) to polymerize octameric septin 12-7-6-2/4-2/4-6-7-12 filaments. The interval 330-356 (PASPGQLMAPGPEKVRKRSKDPRDDEC) is disordered.

The protein belongs to the TRAFAC class TrmE-Era-EngA-EngB-Septin-like GTPase superfamily. Septin GTPase family. In terms of assembly, septins polymerize into heterooligomeric protein complexes that form filaments, and can associate with cellular membranes, actin filaments and microtubules. GTPase activity is required for filament formation. Interacts with SEPTIN6 and SEPTIN11. Self-associates. Component of a octameric complex consisting of SEPTIN12, SEPTIN7, SEPTIN6 and SEPTIN2 or SEPTIN4 in the order 12-7-6-2-2-6-7-12 or 12-7-6-4-4-6-7-12 and located in the sperm annulus; the octamer polymerizes into filaments via the SEPTIN12 N- and C-termini; the SEPTIN12:SEPTIN7 association is mediated by the GTP-binding domains. Interacts with SPAG4 and LMNB1. Associates with alpha- and beta-tubulins. Predominantly expressed in testis and epididymis. Component of the sperm tail annulus (at protein level).

Its subcellular location is the cytoplasm. The protein localises to the cytoskeleton. It is found in the spindle. It localises to the cell projection. The protein resides in the cilium. Its subcellular location is the flagellum. Functionally, filament-forming cytoskeletal GTPase. May play a role in cytokinesis (Potential). Involved in spermatogenesis. Involved in the morphogenesis of sperm heads and the elongation of sperm tails probably implicating the association with alpha- and beta-tubulins. Forms a filamentous structure with SEPTIN7, SEPTIN6, SEPTIN2 and probably SEPTIN4 at the sperm annulus which is required for the structural integrity and motility of the sperm tail during postmeiotic differentiation. The chain is Septin-12 from Rattus norvegicus (Rat).